Here is a 331-residue protein sequence, read N- to C-terminus: Cytochrome bo(3) ubiquinol oxidase subunit 2 (331 aa).

An N-terminal signal peptide occupies residues 1-23; sequence MTKANPFAALKWLSLAPALLLGG. A lipid anchor (N-palmitoyl cysteine) is attached at Cys24. Residue Cys24 is the site of S-diacylglycerol cysteine attachment. Residues 24 to 41 lie on the Periplasmic side of the membrane; the sequence is CDMTLFNPKGQVGMDERT. A helical transmembrane segment spans residues 42-62; the sequence is LIITATLLMLIVVIPVIVMTL. Over 63–86 the chain is Cytoplasmic; sequence AFAWKYRASNTQAEYKPDWHHSNR. Residues 87–107 form a helical membrane-spanning segment; sequence IEAVVWLVPCVIIAILGWITW. Topologically, residues 108–331 are periplasmic; that stretch reads ESTHKLDPYR…DMHMQPSTQE (224 aa).

Belongs to the cytochrome c oxidase subunit 2 family. Heterooctamer of two A chains, two B chains, two C chains and two D chains.

It localises to the cell inner membrane. Functionally, cytochrome bo(3) ubiquinol terminal oxidase is the component of the aerobic respiratory chain of E.coli that predominates when cells are grown at high aeration. Has proton pump activity across the membrane in addition to electron transfer, pumping 2 protons/electron. The sequence is that of Cytochrome bo(3) ubiquinol oxidase subunit 2 (cyoA) from Pseudomonas aeruginosa (strain ATCC 15692 / DSM 22644 / CIP 104116 / JCM 14847 / LMG 12228 / 1C / PRS 101 / PAO1).